The chain runs to 933 residues: Dual 3',5'-cyclic-AMP and -GMP phosphodiesterase 11A (933 aa).

Residues 42-125 form a disordered region; sequence HSQGQGALGP…ASQKELRKSF (84 aa). Phosphoserine occurs at positions 162, 163, and 239. 2 consecutive GAF domains span residues 217-370 and 402-558; these read DLTS…GIAI and DLEK…GLGI. Serine 424 is a 3',5'-cyclic GMP binding site. The PDEase domain occupies 588-912; that stretch reads SKAEVDKFKA…SKWEELHQKR (325 aa). The active-site Proton donor is histidine 664. A divalent metal cation is bound by residues histidine 668, histidine 704, aspartate 705, and aspartate 816.

The protein belongs to the cyclic nucleotide phosphodiesterase family. A divalent metal cation serves as cofactor. As to expression, isoform 1 is present in prostate, pituitary, heart and liver. It is however not present in testis nor in penis, suggesting that weak inhibition by Tadalafil (Cialis) is not relevant (at protein level). Isoform 2 may be expressed in testis. Isoform 4 is expressed in adrenal cortex.

Its subcellular location is the cytoplasm. The protein localises to the cytosol. It carries out the reaction 3',5'-cyclic GMP + H2O = GMP + H(+). The enzyme catalyses 3',5'-cyclic AMP + H2O = AMP + H(+). With respect to regulation, inhibited by 3-isobutyl-1-methylxanthine (IBMX), zaprinast and dipyridamole. cGMP acts as an allosteric activator. Weakly inhibited by Sildenafil (Viagra) and Tadalafil (Cialis); however, the fact that the protein is probably absent from testis, suggests that it is not biologically relevant and is not related with erectile dysfunction. Its function is as follows. Plays a role in signal transduction by regulating the intracellular concentration of cyclic nucleotides cAMP and cGMP. Catalyzes the hydrolysis of both cAMP and cGMP to 5'-AMP and 5'-GMP, respectively. The protein is Dual 3',5'-cyclic-AMP and -GMP phosphodiesterase 11A of Homo sapiens (Human).